A 1726-amino-acid chain; its full sequence is MDSSQQLQESQQLQQQYTRVGIDVIGPMKDLIISVMNSLDTTFKIINETYRIVYFDTDETKLTSSNLDSDDEEFESDDDADEEADLQIQASCNLYTFDGKNRQSVDEIKRIVQHLNETQSQQNDNQAVPVIPTFFVVVNIGVGPSFVSEIKSAAGTTQFIEWIVNDQASKEVFKVSTNLLSHHKKQIELTHACTVGDVNYLDQIILSGVSTDQLKEAHKAGHAIVFDSLLTHNSNSLVVTGTMALLGAIVENGDRKGKRLSLSRSNLSRFPMSITQMCTHLVELDLSDNKITELPKDIQLLKSLRILILRGNLLEDIPLEICYLGDLKILELQENPLNNFPLSVVQSGTKNLLLFCKNILERKKSETWNKVKLMFVGQEGVGKTSLCQALKGSKKKKAELQVTGDTVSTEGVKIQNIKNKKVEFHAWDFGGQQVFYPTHQFFLTTHALYLVVFKLTDPNFAERVNYWVRQVKSNSSGAVPAIFLVGTHSDVCTPEQLQEAESILKANFVKYSRVKENTINFVCCATGKGIKELKKRLIHEAEKSHLIKKDIPGNYMVLEARLTNRGANPGRMAVSGSPIGGGSSAQLSSNAINSQKERYIDYDDYMNECKLSHLQPEEIKGATDFLHNLGIILHFDTPTLKNLVVLDPQWLADVMSSLITFSHNWIKRGILNHSELVAVWGGKYDQSLWPLLLKLLEKFEVSYELPNIAKSLIPSLLPEDAEGEISTIKDREWVTLPQAIESGRCQVFGCDYNFDFMPLGFFARLLLRILLISGVEVRTYWRNGVLLDILTPEQVKLQQSKQQQLQQQQQQQNNNESNDSSVNNNNNNNNNNNNNNIINSSSSSSLNLTQTSTSTSPSKLSLNNSQINNSNSTLNSQQLINPSVSPLSSTTPRHQALITFIKKKSFESKDKDSYKLNIEVRSFNTTIEKDHSASLFFQQILFTIDTLLASSYVGLEITRMIPCIHCVQKNPRADPYYFDFSSCISALQDGKPHLFCRNDPSIPVRIDYIAPDLCLKKVPTLADNEIEYEKQIGKGGFGLVHKGRLVKDKSVVAIKSLILGDSEGETEMIEKFQEFQREVFIMSNLNHPNIVKLYGLMHNPPRMVMEFVPCGDLYHRLLDKAHPIKWSVKLRLMLDIALGIEYMQNQNPPIVHRDLRSPNIFLQSLDENAPVCAKVADFGLSQQSVHSVSGLLGNFQWMAPETIGAEEESYTEKADTYSFAMILYTILTGEGPFDEYSYGKIKFINMIREEGLRPTIPEDCPPRLRNVIELCWSGDPKKRPHFSYIVKELSELRNGNTTSTTTNTSSTTNNLNSANVSIASTSSNADDGSQTNNNNNNNNNNNNNNNNNSGSSIALSPSRSFEQQTTTTTTTTTSPSSPSTSFINSSGSYNTESYSVASSSTTNLLNTLNNANQPVNFIGTASVHKKMEVLAGVEAGETVWTKSADSSLCFWSTKKGHLINELKCPHTVATTMMIKVGKYIWEATNSNGIYIWDMGTMTIVQQLTTPHKGDVCLHFVEYGDNNGVWSGGSEGTVCLWDMQTFEKKHSFSLESAITAMSYFGNNTLYIASGSHIVVFKTKTLLMNVNQNWKHSTGSITSILAMKDEVWSGGSDGRIYIWKVKNEFELQKVQSLEAHHEKITSLIHLEDNVLSGSTDKCISLFKISDPKKPFTTQEHHKQGVTSIVKVQSHIVWAITSDTTTPLVLWNIPQKWEKKTANGILPRLKFFR.

LRR repeat units lie at residues 256–277 (KGKR…ITQM), 280–301 (HLVE…IQLL), 303–324 (SLRI…ICYL), and 326–347 (DLKI…VVQS). Positions 364 to 544 (KSETWNKVKL…KRLIHEAEKS (181 aa)) constitute a Roc domain. Residues 377 to 384 (GQEGVGKT), 428 to 432 (DFGGQ), and 487 to 490 (THSD) contribute to the GTP site. The region spanning 591-787 (AINSQKERYI…RTYWRNGVLL (197 aa)) is the COR domain. Over residues 800 to 881 (SKQQQLQQQQ…STLNSQQLIN (82 aa)) the composition is skewed to low complexity. Residues 800–890 (SKQQQLQQQQ…NPSVSPLSST (91 aa)) are disordered. Residues 1026–1292 (IEYEKQIGKG…SYIVKELSEL (267 aa)) form the Protein kinase domain. Residues 1032–1040 (IGKGGFGLV) and lysine 1055 each bind ATP. Residue aspartate 1154 is the Proton acceptor of the active site. Polar residues predominate over residues 1319–1331 (ASTSSNADDGSQT). A disordered region spans residues 1319 to 1385 (ASTSSNADDG…SSPSTSFINS (67 aa)). The span at 1332 to 1348 (NNNNNNNNNNNNNNNNN) shows a compositional bias: low complexity. Residues 1349-1364 (SGSSIALSPSRSFEQQ) show a composition bias toward polar residues. The span at 1365 to 1381 (TTTTTTTTTSPSSPSTS) shows a compositional bias: low complexity. 6 WD repeats span residues 1422-1461 (SVHK…LINE), 1463-1502 (KCPH…IVQQ), 1506-1546 (PHKG…KKHS), 1589-1627 (KHST…ELQK), 1633-1670 (AHHE…KPFT), and 1674-1714 (HHKQ…EKKT).

Belongs to the protein kinase superfamily. TKL Ser/Thr protein kinase family. ROCO subfamily.

The catalysed reaction is L-seryl-[protein] + ATP = O-phospho-L-seryl-[protein] + ADP + H(+). The enzyme catalyses L-threonyl-[protein] + ATP = O-phospho-L-threonyl-[protein] + ADP + H(+). This is Probable serine/threonine-protein kinase roco4 (roco4) from Dictyostelium discoideum (Social amoeba).